We begin with the raw amino-acid sequence, 136 residues long: Lymphocyte antigen 6E (136 aa).

The N-terminal stretch at 1-26 (MSATSNMRVFLPVLLAALLGMEQVHS) is a signal peptide. A UPAR/Ly6 domain is found at 27 to 118 (LMCFSCTDQK…AGLGLRASIP (92 aa)). Cystine bridges form between Cys29–Cys54, Cys32–Cys41, Cys47–Cys76, Cys80–Cys98, and Cys99–Cys104. N-linked (GlcNAc...) asparagine glycosylation is present at Asn105. A lipid anchor (GPI-anchor amidated alanine) is attached at Ala108. The propeptide at 109-136 (AGLGLRASIPLLGLGLLLSLLALLQLSP) is removed in mature form.

As to quaternary structure, interacts with CHRNA4. Interacts with CD3Z/CD247. Ubiquitously expressed in mouse adult tissues with maximal expression in the lung and the salivary gland. Expression is strikingly lower in the fetal tissues except for the placenta. Present in thymus where its expression is observed in immature thymocytes and thymic stromal cells. Also found on functionally active T-cells as well as B-cells and thymic dendritic cells.

The protein resides in the cell membrane. Its function is as follows. GPI-anchored cell surface protein that regulates T-lymphocytes proliferation, differentiation, and activation. Regulates the T-cell receptor (TCR) signaling by interacting with component CD3Z/CD247 at the plasma membrane, leading to CD3Z/CD247 phosphorylation modulation. Restricts the entry of murine coronavirus, mouse hepatitis virus, by interfering with spike protein-mediated membrane fusion. Also plays an essential role in placenta formation by acting as the main receptor for syncytin-A (SynA). Therefore, participates in the normal fusion of syncytiotrophoblast layer I (SynT-I) and in the proper morphogenesis of both fetal and maternal vasculatures within the placenta. May also act as a modulator of nicotinic acetylcholine receptors (nAChRs) activity. In vitro inhibits alpha-3:beta-4-containing nAChRs maximum response. In Mus musculus (Mouse), this protein is Lymphocyte antigen 6E.